Consider the following 1621-residue polypeptide: Lysophospholipase NTE1 (1621 aa).

Topologically, residues 1–12 (MSSIPTPPDANG) are cytoplasmic. Residues 13 to 33 (NPLIALAVAVIYAILYVLQGV) traverse the membrane as a helical segment. Topologically, residues 34–59 (KYGVSLLTIGIPSCIVRMLQYSLTIS) are lumenal. A helical membrane pass occupies residues 60–80 (LGFPHLLALFAGALLALFFLI). The Cytoplasmic segment spans residues 81 to 1621 (RYRYLTRYAQ…RGNRLRRMSI (1541 aa)). Disordered regions lie at residues 188–209 (PDAS…TRPS), 250–379 (EGEE…SVPR), 545–566 (QTAT…LDET), 648–667 (WNLN…QRDD), 711–735 (VSAL…GSTR), 772–791 (DDEA…GASG), and 839–870 (FRST…ERPF). 2 stretches are compositionally biased toward low complexity: residues 195 to 209 (TPTP…TRPS) and 348 to 361 (RRSQ…RLNS). A nucleoside 3',5'-cyclic phosphate is bound by residues 788–907 (GASG…GYLS) and 951–1070 (RLLS…IAGR). Residues 839-867 (FRSTSSNQENPNSTPGSKHRQSSFGSSNE) show a composition bias toward polar residues. Residues 1316 to 1480 (LVLGGGGARG…MDNTPIQPLR (165 aa)) form the PNPLA domain. The GXGXXG motif lies at 1320–1325 (GGGARG). The short motif at 1347-1351 (GCSIG) is the GXSXG element. Catalysis depends on Ser1349, which acts as the Nucleophile. The Proton acceptor role is filled by Asp1467. The DGA/G motif lies at 1467-1469 (DGG).

Belongs to the NTE family.

Its subcellular location is the endoplasmic reticulum membrane. The enzyme catalyses a 1-acyl-sn-glycero-3-phosphocholine + H2O = sn-glycerol 3-phosphocholine + a fatty acid + H(+). Its activity is regulated as follows. Inhibited by organophosphorus esters. Functionally, intracellular phospholipase B that catalyzes the double deacylation of phosphatidylcholine (PC) to glycerophosphocholine (GroPCho). Plays an important role in membrane lipid homeostasis. Responsible for the rapid PC turnover in response to inositol, elevated temperatures, or when choline is present in the growth medium. This chain is Lysophospholipase NTE1 (NTE1), found in Cryptococcus neoformans var. neoformans serotype D (strain B-3501A) (Filobasidiella neoformans).